The primary structure comprises 130 residues: MPKSVKKINLRKGKRRLPKGVIHIQASFNNTIVTVTDIRGQVVSWSSAGACGFKGTKKSTPFAAQTAAENAIRILIDQGMKQAEVMISGPGPGRDTALRAIRRSGIILSFVRDVTPMPHNGCRPPRKRRV.

Belongs to the universal ribosomal protein uS11 family. As to quaternary structure, part of the 30S ribosomal subunit.

The protein localises to the plastid. The protein resides in the chloroplast. This is Small ribosomal subunit protein uS11c from Marchantia polymorpha (Common liverwort).